We begin with the raw amino-acid sequence, 327 residues long: Serine/threonine-protein phosphatase alpha-1 isoform (327 aa).

Residues Asp62, His64, Asp90, and Asn122 each coordinate Mn(2+). His123 (proton donor) is an active-site residue. Residues His171 and His246 each coordinate Mn(2+). Residues 308-327 (GSSGRPLTPPRGANNKNKKK) are disordered. Thr315 bears the Phosphothreonine mark.

Belongs to the PPP phosphatase family. PP-1 subfamily. As to quaternary structure, interacts with Nop17l. Mn(2+) serves as cofactor.

The catalysed reaction is O-phospho-L-seryl-[protein] + H2O = L-seryl-[protein] + phosphate. It catalyses the reaction O-phospho-L-threonyl-[protein] + H2O = L-threonyl-[protein] + phosphate. This is Serine/threonine-protein phosphatase alpha-1 isoform (Pp1alpha-96A) from Drosophila melanogaster (Fruit fly).